The sequence spans 282 residues: Glycine/sarcosine N-methyltransferase (282 aa).

The span at 1-23 (MTSTQNHPLQTQDDQQRFGQSPE) shows a compositional bias: polar residues. The segment at 1-27 (MTSTQNHPLQTQDDQQRFGQSPESVRE) is disordered. Residues Tyr-35, Trp-43, Arg-52, Ala-76, Asp-97, 123–124 (DW), and Leu-141 contribute to the S-adenosyl-L-methionine site. Substrate-binding residues include Asn-143, Arg-176, and Tyr-217.

This sequence belongs to the class I-like SAM-binding methyltransferase superfamily. Glycine N-methyltransferase family. Monomer.

It carries out the reaction glycine + 2 S-adenosyl-L-methionine = N,N-dimethylglycine + 2 S-adenosyl-L-homocysteine + 2 H(+). The catalysed reaction is glycine + S-adenosyl-L-methionine = sarcosine + S-adenosyl-L-homocysteine + H(+). It catalyses the reaction sarcosine + S-adenosyl-L-methionine = N,N-dimethylglycine + S-adenosyl-L-homocysteine + H(+). It participates in amine and polyamine biosynthesis; betaine biosynthesis via glycine pathway; betaine from glycine: step 1/3. It functions in the pathway amine and polyamine biosynthesis; betaine biosynthesis via glycine pathway; betaine from glycine: step 2/3. Catalyzes the methylation of glycine and sarcosine to sarcosine and dimethylglycine, respectively, with S-adenosylmethionine (AdoMet) acting as the methyl donor. It has strict specificity for glycine and sarcosine as the methyl group acceptors. This Parasynechococcus marenigrum (strain WH8102) protein is Glycine/sarcosine N-methyltransferase.